The primary structure comprises 328 residues: UPF0421 protein SERP1427 (328 aa).

4 helical membrane passes run 26–46, 61–81, 109–129, and 132–152; these read LFCM…IVTI, LPAT…FGDQ, AVLT…FNFF, and LLTA…ILPP.

This sequence belongs to the UPF0421 family.

The protein resides in the cell membrane. In Staphylococcus epidermidis (strain ATCC 35984 / DSM 28319 / BCRC 17069 / CCUG 31568 / BM 3577 / RP62A), this protein is UPF0421 protein SERP1427.